A 144-amino-acid chain; its full sequence is UPF0102 protein BURPS1106A_3900 (144 aa).

The disordered stretch occupies residues 1 to 28 (MCHAREASPGTGEPEAAPRDNFPRAAGS).

Belongs to the UPF0102 family.

The polypeptide is UPF0102 protein BURPS1106A_3900 (Burkholderia pseudomallei (strain 1106a)).